The following is a 65-amino-acid chain: Large ribosomal subunit protein bL35 (65 aa).

The span at 1–16 (MPKMKTKKSAAKRFKV) shows a compositional bias: basic residues. Residues 1 to 25 (MPKMKTKKSAAKRFKVRGSGSIKRG) form a disordered region.

The protein belongs to the bacterial ribosomal protein bL35 family.

This chain is Large ribosomal subunit protein bL35, found in Bordetella parapertussis (strain 12822 / ATCC BAA-587 / NCTC 13253).